A 253-amino-acid chain; its full sequence is Ribonuclease HII (253 aa).

The region spanning 70–253 is the RNase H type-2 domain; sequence NLIAGIDEVG…KSFEPIKSML (184 aa). D76, E77, and D168 together coordinate a divalent metal cation.

Belongs to the RNase HII family. Mn(2+) is required as a cofactor. Requires Mg(2+) as cofactor.

It is found in the cytoplasm. The enzyme catalyses Endonucleolytic cleavage to 5'-phosphomonoester.. In terms of biological role, endonuclease that specifically degrades the RNA of RNA-DNA hybrids. The chain is Ribonuclease HII from Streptococcus agalactiae serotype III (strain NEM316).